Consider the following 151-residue polypeptide: Large ribosomal subunit protein uL30 (151 aa).

The protein belongs to the universal ribosomal protein uL30 family. In terms of assembly, part of the 50S ribosomal subunit.

The protein is Large ribosomal subunit protein uL30 of Methanothrix thermoacetophila (strain DSM 6194 / JCM 14653 / NBRC 101360 / PT) (Methanosaeta thermophila).